The following is a 215-amino-acid chain: Vesicle transport protein SFT2C (215 aa).

The Cytoplasmic segment spans residues 1–82 (MADLHRQLQE…RGQRLAAGGG (82 aa)). Residues 83–103 (CLLLAALCFGLAALYAPVLLL) traverse the membrane as a helical segment. Over 104-107 (RARK) the chain is Lumenal. A helical transmembrane segment spans residues 108 to 128 (FALLWSLGSALALAGSALLRG). Over 129-142 (GAACGRLLRCEEAP) the chain is Cytoplasmic. A helical transmembrane segment spans residues 143–163 (SRPALLYMAALGATLFAALGL). At 164–166 (RST) the chain is on the lumenal side. The chain crosses the membrane as a helical span at residues 167-187 (LLTVLGAGAQVAALLAALVGL). Residues 188–215 (LPWGGGTALRLALGRLGRGAGLAKVLPV) are Cytoplasmic-facing.

The protein belongs to the SFT2 family.

The protein resides in the membrane. May be involved in fusion of retrograde transport vesicles derived from an endocytic compartment with the Golgi complex. This Homo sapiens (Human) protein is Vesicle transport protein SFT2C.